The chain runs to 553 residues: Cytokine-like nuclear factor N-PAC (553 aa).

The PWWP domain maps to 8–66; the sequence is LGDLVWGKLGRYPPWPGKIVNPPKDLKKPRGKKCFFVKFFGTEDHAWIKVEQLKPYHAH. Composition is skewed to basic and acidic residues over residues 92-145 and 162-182; these read RAKG…EGKK and RAQE…KDLT. The disordered stretch occupies residues 92–188; sequence RAKGKDQTSS…KDLTIPESST (97 aa). Phosphoserine is present on serine 130. A Glycyl lysine isopeptide (Lys-Gly) (interchain with G-Cter in SUMO2) cross-link involves residue lysine 135. Phosphoserine is present on serine 167. Residues 168–180 constitute a DNA-binding region (a.T hook); it reads PRKRGRPPKDEKD. Glycyl lysine isopeptide (Lys-Gly) (interchain with G-Cter in SUMO2) cross-links involve residues lysine 176, lysine 179, lysine 201, and lysine 211. The interaction with histone H3 stretch occupies residues 214-217; sequence DPHF. Positions 216-225 are interaction with KDM1B; the sequence is HFHHFLLSQT. Residues lysine 227, lysine 237, lysine 240, and lysine 269 each participate in a glycyl lysine isopeptide (Lys-Gly) (interchain with G-Cter in SUMO2) cross-link. The segment at 261–553 is dehydrogenase domain; the sequence is GSITPTDKKI…MSAVYRAYIH (293 aa). 271–285 is a binding site for NAD(+); the sequence is GFLGLGLMGSGIVSN. Residue lysine 302 forms a Glycyl lysine isopeptide (Lys-Gly) (interchain with G-Cter in SUMO2) linkage. Threonine 362 and lysine 505 together coordinate NAD(+). Serine 540 bears the Phosphoserine mark.

Belongs to the HIBADH-related family. NP60 subfamily. As to quaternary structure, homotetramere. Interacts with MAPK14. Interacts with KDM1B at nucleosomes; this interaction stimulates H3K4me1 and H3K4me2 demethylation. Binds to mononucleosomes. Interacts with GATA4; the interaction is required for a synergistic activation of GATA4 target genes transcription.

The protein resides in the nucleus. Its subcellular location is the chromosome. Functionally, cytokine-like nuclear factor with chromatin gene reader activity involved in chromatin modification and regulation of gene expression. Acts as a nucleosome-destabilizing factor that is recruited to genes during transcriptional activation. Recognizes and binds histone H3 without a preference for specific epigenetic markers and also binds DNA. Interacts with KDM1B and promotes its histone demethylase activity by facilitating the capture of H3 tails, they form a multifunctional enzyme complex that modifies transcribed chromatin and facilitates Pol II transcription through nucleosomes. Stimulates the acetylation of 'Lys-56' of nucleosomal histone H3 (H3K56ac) by EP300. With GATA4, co-binds a defined set of heart development genes and coregulates their expression during cardiomyocyte differentiation. Regulates p38 MAP kinase activity by mediating stress activation of MAPK14/p38alpha and specifically regulating MAPK14 signaling. Indirectly promotes phosphorylation of MAPK14 and activation of ATF2. The phosphorylation of MAPK14 requires upstream activity of MAP2K4 and MAP2K6. The sequence is that of Cytokine-like nuclear factor N-PAC from Homo sapiens (Human).